Reading from the N-terminus, the 187-residue chain is Oligoribonuclease (187 aa).

The Exonuclease domain occupies 7–170 (LCWLDMEMTG…DDILESIEEM (164 aa)). The active site involves Tyr-128.

It belongs to the oligoribonuclease family.

It is found in the cytoplasm. 3'-to-5' exoribonuclease specific for small oligoribonucleotides. The protein is Oligoribonuclease of Neisseria meningitidis serogroup C / serotype 2a (strain ATCC 700532 / DSM 15464 / FAM18).